We begin with the raw amino-acid sequence, 250 residues long: UPF0259 membrane protein PC1_1998 (250 aa).

6 helical membrane-spanning segments follow: residues 20–40, 90–110, 132–152, 156–176, 192–212, and 222–242; these read FISI…LNHA, FAAL…IQLV, LLFL…LLVI, LLAI…SGIF, ATAP…LVVS, and LGVV…IYLF.

Belongs to the UPF0259 family.

It localises to the cell inner membrane. The protein is UPF0259 membrane protein PC1_1998 of Pectobacterium carotovorum subsp. carotovorum (strain PC1).